A 634-amino-acid polypeptide reads, in one-letter code: Frizzled and smoothened-like protein D (634 aa).

A signal peptide spans 1–21; that stretch reads MINKFKFYLIFLKLILILVNC. Residues 22-257 are Extracellular-facing; the sequence is QNSLNDYGFG…QMDSVINMSK (236 aa). Residues 34-178 enclose the FZ domain; the sequence is DESSICTSYI…LTKYGYTANG (145 aa). Residues asparagine 126, asparagine 168, asparagine 215, asparagine 243, and asparagine 254 are each glycosylated (N-linked (GlcNAc...) asparagine). A helical transmembrane segment spans residues 258–278; sequence AMSSISFVLSLFNVITFGLLI. At 279–287 the chain is on the cytoplasmic side; that stretch reads KKKSKYNVC. A helical transmembrane segment spans residues 288–308; sequence IALMAIGSSFIYLSDIINYGV. Topologically, residues 309–335 are extracellular; it reads GIEKQLCPEPGRVATQRVDSLCGFTGS. Residues 336 to 356 traverse the membrane as a helical segment; that stretch reads IFHIGITLCVLWSMTMGIVLY. Residues 357-368 lie on the Cytoplasmic side of the membrane; it reads SKIKQFKLPNFR. The helical transmembrane segment at 369-389 threads the bilayer; that stretch reads YFLIGNLSFTVVTLIILASAK. The Extracellular segment spans residues 390–410; the sequence is KFQGGNGFLECWMRDRWYVVA. Residues 411-431 form a helical membrane-spanning segment; it reads IFWIPCGIALLLGVLSICGVI. The Cytoplasmic portion of the chain corresponds to 432-454; sequence FEIYKISKNVSLKDSKVVIRELK. The chain crosses the membrane as a helical span at residues 455–475; sequence PFVLVVTVSASLIYLFVFYFD. The Extracellular portion of the chain corresponds to 476-513; it reads SESKYDFYKKGVEDYILCLLTSENPLDECYTVGPNFNS. Residues 514-534 form a helical membrane-spanning segment; the sequence is YFMFYFLIRFFGILFFGIFGT. Topologically, residues 535 to 634 are cytoplasmic; sequence SEIARNAWTE…MEIELDSIDI (100 aa). Residues 560–624 are disordered; it reads VSSSTRGGGG…NNNNNDNNNK (65 aa). 2 stretches are compositionally biased toward low complexity: residues 572–592 and 609–622; these read SGIKSSSSSSNSGVCNNNNST and DNTIITNNNNNDNN.

It belongs to the G-protein coupled receptor Fz/Smo family.

It is found in the membrane. The chain is Frizzled and smoothened-like protein D (fslD) from Dictyostelium discoideum (Social amoeba).